The following is a 348-amino-acid chain: Holliday junction branch migration complex subunit RuvB (348 aa).

The tract at residues 4-184 (ADRLIAASGR…FGIVQRLEFY (181 aa)) is large ATPase domain (RuvB-L). Residues Ile23, Arg24, Gly65, Lys68, Thr69, Thr70, 131 to 133 (EDF), Arg174, Tyr184, and Arg221 contribute to the ATP site. A Mg(2+)-binding site is contributed by Thr69. The small ATPAse domain (RuvB-S) stretch occupies residues 185-255 (NDKDLSTIVS…VADMALNLLD (71 aa)). Residues 258–348 (ERGFDHSDRR…GGDFSGPGDE (91 aa)) form a head domain (RuvB-H) region. The DNA site is built by Arg294, Arg313, and Arg318.

It belongs to the RuvB family. As to quaternary structure, homohexamer. Forms an RuvA(8)-RuvB(12)-Holliday junction (HJ) complex. HJ DNA is sandwiched between 2 RuvA tetramers; dsDNA enters through RuvA and exits via RuvB. An RuvB hexamer assembles on each DNA strand where it exits the tetramer. Each RuvB hexamer is contacted by two RuvA subunits (via domain III) on 2 adjacent RuvB subunits; this complex drives branch migration. In the full resolvosome a probable DNA-RuvA(4)-RuvB(12)-RuvC(2) complex forms which resolves the HJ.

The protein resides in the cytoplasm. It catalyses the reaction ATP + H2O = ADP + phosphate + H(+). Its function is as follows. The RuvA-RuvB-RuvC complex processes Holliday junction (HJ) DNA during genetic recombination and DNA repair, while the RuvA-RuvB complex plays an important role in the rescue of blocked DNA replication forks via replication fork reversal (RFR). RuvA specifically binds to HJ cruciform DNA, conferring on it an open structure. The RuvB hexamer acts as an ATP-dependent pump, pulling dsDNA into and through the RuvAB complex. RuvB forms 2 homohexamers on either side of HJ DNA bound by 1 or 2 RuvA tetramers; 4 subunits per hexamer contact DNA at a time. Coordinated motions by a converter formed by DNA-disengaged RuvB subunits stimulates ATP hydrolysis and nucleotide exchange. Immobilization of the converter enables RuvB to convert the ATP-contained energy into a lever motion, pulling 2 nucleotides of DNA out of the RuvA tetramer per ATP hydrolyzed, thus driving DNA branch migration. The RuvB motors rotate together with the DNA substrate, which together with the progressing nucleotide cycle form the mechanistic basis for DNA recombination by continuous HJ branch migration. Branch migration allows RuvC to scan DNA until it finds its consensus sequence, where it cleaves and resolves cruciform DNA. This is Holliday junction branch migration complex subunit RuvB from Pseudomonas putida (strain ATCC 700007 / DSM 6899 / JCM 31910 / BCRC 17059 / LMG 24140 / F1).